The primary structure comprises 351 residues: Methylthioribose-1-phosphate isomerase (351 aa).

Substrate is bound by residues Arg-51–Ala-53, Arg-94, and Gln-199. Asp-240 serves as the catalytic Proton donor. Asn-250–Lys-251 lines the substrate pocket.

The protein belongs to the EIF-2B alpha/beta/delta subunits family. MtnA subfamily. In terms of assembly, homodimer.

It carries out the reaction 5-(methylsulfanyl)-alpha-D-ribose 1-phosphate = 5-(methylsulfanyl)-D-ribulose 1-phosphate. It participates in amino-acid biosynthesis; L-methionine biosynthesis via salvage pathway; L-methionine from S-methyl-5-thio-alpha-D-ribose 1-phosphate: step 1/6. In terms of biological role, catalyzes the interconversion of methylthioribose-1-phosphate (MTR-1-P) into methylthioribulose-1-phosphate (MTRu-1-P). The chain is Methylthioribose-1-phosphate isomerase from Bacillus thuringiensis subsp. konkukian (strain 97-27).